A 202-amino-acid polypeptide reads, in one-letter code: Remorin 1.4 (202 aa).

The segment covering 1–10 (MAEEEPKKVT) has biased composition (basic and acidic residues). A disordered region spans residues 1-79 (MAEEEPKKVT…VEEEKKEGSV (79 aa)). The segment covering 25 to 39 (EKPAAAADVAPQEKP) has biased composition (low complexity). Pro residues predominate over residues 40-50 (VAPPPVLPSPA). A compositionally biased stretch (basic and acidic residues) spans 68-79 (KEVEEEKKEGSV). Residues 123–169 (ENNKKAAVEAELKKMEEQLEKKKAEYVEQMKNKIAQIHKEAEEKRAM) adopt a coiled-coil conformation.

It belongs to the remorin family.

The protein is Remorin 1.4 of Arabidopsis thaliana (Mouse-ear cress).